A 986-amino-acid chain; its full sequence is Replication factor C subunit 1 (986 aa).

Positions M1 to D95 are disordered. A phosphoserine mark is found at S18, S28, S40, S41, S48, and S58. Phosphothreonine is present on T60. Phosphoserine occurs at positions 62 and 63. Phosphothreonine is present on T71. Phosphoserine is present on residues S128, S137, S149, S154, S156, S164, and S194. Residues E136 to V147 show a composition bias toward basic and acidic residues. Disordered regions lie at residues E136–E203 and K317–P388. The residue at position 197 (T197) is a Phosphothreonine. A BRCT domain is found at G232–E322. Basic and acidic residues-rich tracts occupy residues K317–D364 and V370–N385. G487–T494 provides a ligand contact to ATP. The interval S913–K986 is disordered. A compositionally biased stretch (acidic residues) spans G917–G932. S938 and S939 each carry phosphoserine. The Nuclear localization signal motif lies at K955–R959. Residues T962–K979 are compositionally biased toward low complexity.

This sequence belongs to the activator 1 large subunit family. As to quaternary structure, interacts with C-terminus of PCNA.

The protein resides in the nucleus. Its function is as follows. The elongation of primed DNA templates by DNA polymerase delta and epsilon requires the action of the accessory proteins proliferating cell nuclear antigen (PCNA) and activator 1. This subunit binds to the primer-template junction. In Drosophila melanogaster (Fruit fly), this protein is Replication factor C subunit 1 (Gnf1).